The following is a 268-amino-acid chain: NADH-quinone oxidoreductase subunit B 1 (268 aa).

[4Fe-4S] cluster is bound by residues Cys-42, Cys-43, Cys-108, and Cys-138.

Belongs to the complex I 20 kDa subunit family. As to quaternary structure, NDH-1 is composed of 14 different subunits. Subunits NuoB, C, D, E, F, and G constitute the peripheral sector of the complex. It depends on [4Fe-4S] cluster as a cofactor.

The protein localises to the cell membrane. The catalysed reaction is a quinone + NADH + 5 H(+)(in) = a quinol + NAD(+) + 4 H(+)(out). Functionally, NDH-1 shuttles electrons from NADH, via FMN and iron-sulfur (Fe-S) centers, to quinones in the respiratory chain. The immediate electron acceptor for the enzyme in this species is believed to be ubiquinone. Couples the redox reaction to proton translocation (for every two electrons transferred, four hydrogen ions are translocated across the cytoplasmic membrane), and thus conserves the redox energy in a proton gradient. In Roseiflexus sp. (strain RS-1), this protein is NADH-quinone oxidoreductase subunit B 1.